We begin with the raw amino-acid sequence, 204 residues long: Pyridoxal 5'-phosphate synthase subunit PdxT (204 aa).

52 to 54 (GES) contacts L-glutamine. The active-site Nucleophile is the Cys84. L-glutamine-binding positions include Arg116 and 143–144 (IR). Catalysis depends on charge relay system residues His184 and Glu186.

The protein belongs to the glutaminase PdxT/SNO family. As to quaternary structure, in the presence of PdxS, forms a dodecamer of heterodimers. Only shows activity in the heterodimer.

It catalyses the reaction aldehydo-D-ribose 5-phosphate + D-glyceraldehyde 3-phosphate + L-glutamine = pyridoxal 5'-phosphate + L-glutamate + phosphate + 3 H2O + H(+). The enzyme catalyses L-glutamine + H2O = L-glutamate + NH4(+). The protein operates within cofactor biosynthesis; pyridoxal 5'-phosphate biosynthesis. Functionally, catalyzes the hydrolysis of glutamine to glutamate and ammonia as part of the biosynthesis of pyridoxal 5'-phosphate. The resulting ammonia molecule is channeled to the active site of PdxS. The protein is Pyridoxal 5'-phosphate synthase subunit PdxT of Pyrobaculum aerophilum (strain ATCC 51768 / DSM 7523 / JCM 9630 / CIP 104966 / NBRC 100827 / IM2).